The chain runs to 764 residues: Semaphorin-3D (764 aa).

A signal peptide spans 1–41 (MKTAGEPDRRRQRRQVRTGRFSCAWWSTSVMLFFSLPEGNC). Residues 48–535 (RVKLGYKDLI…GSDGLVQVSL (488 aa)) enclose the Sema domain. Cysteine 121 and cysteine 132 are disulfide-bonded. The N-linked (GlcNAc...) asparagine glycan is linked to asparagine 143. 3 disulfides stabilise this stretch: cysteine 150–cysteine 159, cysteine 290–cysteine 402, and cysteine 314–cysteine 362. The N-linked (GlcNAc...) asparagine glycan is linked to asparagine 490. Cysteine 538 and cysteine 556 are oxidised to a cystine. Asparagine 610 is a glycosylation site (N-linked (GlcNAc...) asparagine). The 80-residue stretch at 661 to 740 (GDAGSYFCTS…EYCETMWHRE (80 aa)) folds into the Ig-like C2-type domain. Cysteine 668 and cysteine 733 form a disulfide bridge. The segment at 743–764 (QKQKGKWKHVQELRKSRNRRHH) is disordered.

It belongs to the semaphorin family.

Its subcellular location is the secreted. Its function is as follows. May play a role in the guidance of several axon pathways. The sequence is that of Semaphorin-3D (sema3d) from Danio rerio (Zebrafish).